We begin with the raw amino-acid sequence, 461 residues long: Tubulin gamma-1 chain (461 aa).

Position 142–148 (142–148) interacts with GTP; that stretch reads AGGTGSG.

Belongs to the tubulin family.

It localises to the cytoplasm. The protein localises to the cytoskeleton. It is found in the microtubule organizing center. The protein resides in the centrosome. Tubulin is the major constituent of microtubules. The gamma chain is found at microtubule organizing centers (MTOC) such as the spindle poles or the centrosome, suggesting that it is involved in the minus-end nucleation of microtubule assembly. The chain is Tubulin gamma-1 chain from Euplotoides octocarinatus (Freshwater ciliate).